A 614-amino-acid polypeptide reads, in one-letter code: Membrane protein insertase YidC (614 aa).

The chain crosses the membrane as a helical span at residues 6–26; the sequence is IVLLIIFSTSLLFLWDAWIKE. Polar residues-rich tracts occupy residues 34–48 and 60–70; these read PAIT…STQS and ELTSSQASPDT. The interval 34–87 is disordered; that stretch reads PAITQADSSAGSTQSRNDDSLPVPGSELTSSQASPDTNGIPASGGNGDSVTPRL. 4 consecutive transmembrane segments (helical) span residues 380–400, 450–470, 484–504, and 524–544; these read WGVA…PLSA, FPIL…LAAV, LSSP…MFVQ, and PVAF…YSLV. Residues 562 to 614 are disordered; it reads TAPSKDTPEPPVSKQVNSSENPETTANSPADSPKQPQTPANNPRKMYKRTRKK. Residues 575–602 show a composition bias toward polar residues; it reads KQVNSSENPETTANSPADSPKQPQTPAN.

It belongs to the OXA1/ALB3/YidC family. Type 1 subfamily. As to quaternary structure, interacts with the Sec translocase complex via SecD. Specifically interacts with transmembrane segments of nascent integral membrane proteins during membrane integration.

The protein resides in the cell inner membrane. Its function is as follows. Required for the insertion and/or proper folding and/or complex formation of integral membrane proteins into the membrane. Involved in integration of membrane proteins that insert both dependently and independently of the Sec translocase complex, as well as at least some lipoproteins. Aids folding of multispanning membrane proteins. The chain is Membrane protein insertase YidC from Nitrosomonas europaea (strain ATCC 19718 / CIP 103999 / KCTC 2705 / NBRC 14298).